A 394-amino-acid polypeptide reads, in one-letter code: Elongation factor Tu 1 (394 aa).

Positions 9 to 204 (KPHCNIGTIG…AIDDYIPQPT (196 aa)) constitute a tr-type G domain. The interval 18-25 (GHVDHGKT) is G1. 18-25 (GHVDHGKT) is a binding site for GTP. Thr25 is a binding site for Mg(2+). The G2 stretch occupies residues 61-65 (GITIQ). A G3 region spans residues 82-85 (DCPG). GTP contacts are provided by residues 82–86 (DCPGH) and 137–140 (NKID). The interval 137–140 (NKID) is G4. Positions 174 to 176 (SAL) are G5.

It belongs to the TRAFAC class translation factor GTPase superfamily. Classic translation factor GTPase family. EF-Tu/EF-1A subfamily. In terms of assembly, monomer.

The protein localises to the cytoplasm. It carries out the reaction GTP + H2O = GDP + phosphate + H(+). In terms of biological role, GTP hydrolase that promotes the GTP-dependent binding of aminoacyl-tRNA to the A-site of ribosomes during protein biosynthesis. The sequence is that of Elongation factor Tu 1 from Orientia tsutsugamushi (strain Boryong) (Rickettsia tsutsugamushi).